The following is a 415-amino-acid chain: MLHRPRITPAVANARRAMLNTLPADLHNQLVLIALSGGRDSLAAMVIASWVIPRLNGRVGAVVVDHGLQENSARIADEVRIRAEQFALNPILIKRVSPSRVSAGPEASARIARYAAFYDALEETKAYAIILAHTLDDQAETVLLGLMRGSGPSSLRGMKAVSYTPEDCRYMNNKACNSVTAVYAHNTQRCSCDSTQRCSCDSRPYPPPPEPRNENRSYFPHPSCKCVEGSATRFTNADIDSRFGVFIRPFLDITRHETGKICEFYGLDYWNDPHNEDVRFSRVRIRHNVMPVLENEIGPGVKYALSRTAKLAQLDTEYLDHLSNELLDEIASKESDWSIRLPINTLQKTPVPIRLRVIRLAALQYFTVSLSFKHTRQIERLLCSSCDIKHVNLPRLITAQRVGNYIYMHTLRGKL.

36-41 (SGGRDS) contacts ATP.

It belongs to the tRNA(Ile)-lysidine synthase family.

Its subcellular location is the cytoplasm. The enzyme catalyses cytidine(34) in tRNA(Ile2) + L-lysine + ATP = lysidine(34) in tRNA(Ile2) + AMP + diphosphate + H(+). In terms of biological role, ligates lysine onto the cytidine present at position 34 of the AUA codon-specific tRNA(Ile) that contains the anticodon CAU, in an ATP-dependent manner. Cytidine is converted to lysidine, thus changing the amino acid specificity of the tRNA from methionine to isoleucine. The polypeptide is tRNA(Ile)-lysidine synthase (Tropheryma whipplei (strain Twist) (Whipple's bacillus)).